The following is a 438-amino-acid chain: Enolase (438 aa).

(2R)-2-phosphoglycerate is bound at residue Gln-174. Glu-216 acts as the Proton donor in catalysis. The Mg(2+) site is built by Asp-253, Glu-297, and Asp-324. The (2R)-2-phosphoglycerate site is built by Lys-349, Arg-378, Ser-379, and Lys-400. Lys-349 serves as the catalytic Proton acceptor.

Belongs to the enolase family. Component of the RNA degradosome, a multiprotein complex involved in RNA processing and mRNA degradation. The cofactor is Mg(2+).

It localises to the cytoplasm. The protein localises to the secreted. It is found in the cell surface. The catalysed reaction is (2R)-2-phosphoglycerate = phosphoenolpyruvate + H2O. The protein operates within carbohydrate degradation; glycolysis; pyruvate from D-glyceraldehyde 3-phosphate: step 4/5. Catalyzes the reversible conversion of 2-phosphoglycerate (2-PG) into phosphoenolpyruvate (PEP). It is essential for the degradation of carbohydrates via glycolysis. This is Enolase from Psychrobacter cryohalolentis (strain ATCC BAA-1226 / DSM 17306 / VKM B-2378 / K5).